A 399-amino-acid polypeptide reads, in one-letter code: Beta-1,6-galactosyltransferase GALT31A (399 aa).

Over 1–12 the chain is Cytoplasmic; the sequence is MGMGRYQKSATS. The chain crosses the membrane as a helical; Signal-anchor for type II membrane protein span at residues 13 to 35; that stretch reads GVSARWVFVLCISSFLLGVLVVN. The Lumenal portion of the chain corresponds to 36-399; the sequence is RLLASFETVD…GDGAIWHSSF (364 aa).

It belongs to the glycosyltransferase 31 family. In terms of assembly, interacts with GALT29A. Mn(2+) is required as a cofactor.

Its subcellular location is the golgi apparatus membrane. The protein operates within protein modification; protein glycosylation. Its function is as follows. Beta-galactosyltransferase involved in elongation of beta-1,6-linked galactan side chains on arabinogalactan proteins. Required for the progression of embryogenesis beyond the globular stage. Beta-galactosyltransferase involved in the biosynthesis of type II arabinogalactan. Transfers galactose from UDP-galactose to a mixture of various oligosaccharides derived from arabinogalactan proteins. Forms a complex with GALT29A that can work cooperatively to enhance the activities of adding galactose residues at O6 positions to beta-1,6-linked galactan and beta-1,3-linked galactan. This Arabidopsis thaliana (Mouse-ear cress) protein is Beta-1,6-galactosyltransferase GALT31A.